The following is a 465-amino-acid chain: 2-methylcitrate synthase, mitochondrial (465 aa).

The transit peptide at 1–29 (MAMTMRSTRHASKLAQTARLALTNSRRYS) directs the protein to the mitochondrion. Arginine 74 and lysine 192 together coordinate CoA. Histidine 269 contributes to the oxaloacetate binding site. Leucine 304 is a binding site for CoA. Histidine 305 is a catalytic residue. Positions 346, 348, and 349 each coordinate CoA. The oxaloacetate site is built by histidine 351 and arginine 360. Histidine 351 is a catalytic residue. The CoA site is built by threonine 400, lysine 401, and asparagine 406. Aspartate 408 is a catalytic residue. Oxaloacetate-binding residues include arginine 434 and arginine 454.

This sequence belongs to the citrate synthase family. In terms of assembly, homodimer.

The protein localises to the mitochondrion matrix. The enzyme catalyses propanoyl-CoA + oxaloacetate + H2O = (2S,3S)-2-methylcitrate + CoA + H(+). It carries out the reaction oxaloacetate + acetyl-CoA + H2O = citrate + CoA + H(+). It functions in the pathway organic acid metabolism; propanoate degradation. In terms of biological role, component of the methylcitrate cycle that catalyzes the synthesis of (2S,3S)-2-methylcitrate from propionyl-CoA and oxaloacetate. Plays an important role in detoxification of propionyl-CoA, an inhibitor of both primary and secondary metabolism. Also has citrate synthase activity using as substrates acetyl-CoA and oxaloacetate. Plays a key role in the estabishment of invasive pulmonary aspergillosis. This is 2-methylcitrate synthase, mitochondrial from Aspergillus fumigatus (strain CBS 144.89 / FGSC A1163 / CEA10) (Neosartorya fumigata).